The sequence spans 90 residues: Probable Fe(2+)-trafficking protein (90 aa).

This sequence belongs to the Fe(2+)-trafficking protein family. As to quaternary structure, monomer.

Could be a mediator in iron transactions between iron acquisition and iron-requiring processes, such as synthesis and/or repair of Fe-S clusters in biosynthetic enzymes. The chain is Probable Fe(2+)-trafficking protein from Hamiltonella defensa subsp. Acyrthosiphon pisum (strain 5AT).